Here is a 369-residue protein sequence, read N- to C-terminus: 3-isopropylmalate dehydrogenase (369 aa).

77 to 90 (GPKYDVLDFSVKPE) provides a ligand contact to NAD(+). The substrate site is built by arginine 97, arginine 107, arginine 135, and aspartate 226. Residues aspartate 226, aspartate 250, and aspartate 254 each coordinate Mg(2+). Position 289–301 (289–301 (GSAPDIAGQGKAN)) interacts with NAD(+).

The protein belongs to the isocitrate and isopropylmalate dehydrogenases family. LeuB type 1 subfamily. As to quaternary structure, homodimer. Mg(2+) is required as a cofactor. Mn(2+) serves as cofactor.

The protein localises to the cytoplasm. It carries out the reaction (2R,3S)-3-isopropylmalate + NAD(+) = 4-methyl-2-oxopentanoate + CO2 + NADH. Its pathway is amino-acid biosynthesis; L-leucine biosynthesis; L-leucine from 3-methyl-2-oxobutanoate: step 3/4. Catalyzes the oxidation of 3-carboxy-2-hydroxy-4-methylpentanoate (3-isopropylmalate) to 3-carboxy-4-methyl-2-oxopentanoate. The product decarboxylates to 4-methyl-2 oxopentanoate. This is 3-isopropylmalate dehydrogenase from Cereibacter sphaeroides (strain ATCC 17023 / DSM 158 / JCM 6121 / CCUG 31486 / LMG 2827 / NBRC 12203 / NCIMB 8253 / ATH 2.4.1.) (Rhodobacter sphaeroides).